The sequence spans 132 residues: Small ribosomal subunit protein uS8 (132 aa).

This sequence belongs to the universal ribosomal protein uS8 family. As to quaternary structure, part of the 30S ribosomal subunit. Contacts proteins S5 and S12.

In terms of biological role, one of the primary rRNA binding proteins, it binds directly to 16S rRNA central domain where it helps coordinate assembly of the platform of the 30S subunit. This is Small ribosomal subunit protein uS8 from Clostridium botulinum (strain Alaska E43 / Type E3).